Reading from the N-terminus, the 447-residue chain is MTRLFGTDGVRGLANEVLTAPLALKLGAAAAHVLTAEKRVDGRRPVAIVGRDPRVSGEMLAAALSAGMASQGVDVIRVGVIPTPAVAFLTDDYGADMGVMISASHNPMPDNGIKFFSAGGHKLPDHVEDEIERVMDSLPAEGPTGHGVGRVIEEATDAQDRYLEHLKEAVPTSLEGIKIVVDAANGAASVVAPKAYEAAGATVIAIHNKPDSYNINMDCGSTHIDQVQAAVLKHGADLGLAHDGDADRCLAVDKDGNLIDGDQIMAMLAIAMKENGELRKNTLVGTVMSNLGLKIAMDEAGITLRTTKVGDRYVLEDLNAGGFSLGGEQSGHIVLPDHGTTGDGTLTGLSIMARMAETGKSLGELAQAMTVLPQVLINVPVSDKSTIVSHPSVVAAIAEAEAELGSTGRVLLRASGTEELFRVMVEAGDKEQARRIAGRLSAVVAEV.

Ser104 functions as the Phosphoserine intermediate in the catalytic mechanism. Ser104, Asp243, Asp245, and Asp247 together coordinate Mg(2+). Ser104 carries the phosphoserine modification.

Belongs to the phosphohexose mutase family. It depends on Mg(2+) as a cofactor. In terms of processing, activated by phosphorylation.

It carries out the reaction alpha-D-glucosamine 1-phosphate = D-glucosamine 6-phosphate. Catalyzes the conversion of glucosamine-6-phosphate to glucosamine-1-phosphate. This is Phosphoglucosamine mutase from Corynebacterium glutamicum (strain R).